Consider the following 840-residue polypeptide: Probable inorganic carbon transporter subunit DabA (840 aa).

Residues Cys355, Asp357, His539, and Cys554 each contribute to the Zn(2+) site.

Belongs to the inorganic carbon transporter (TC 9.A.2) DabA family. In terms of assembly, forms a complex with DabB. Zn(2+) is required as a cofactor.

It localises to the cell membrane. Its function is as follows. Part of an energy-coupled inorganic carbon pump. The protein is Probable inorganic carbon transporter subunit DabA of Roseiflexus castenholzii (strain DSM 13941 / HLO8).